Reading from the N-terminus, the 601-residue chain is Serine/threonine-protein phosphatase 2A 65 kDa regulatory subunit A beta isoform (601 aa).

Ala2 bears the N-acetylalanine mark. HEAT repeat units lie at residues 20-58, 59-96, 97-135, 136-173, 174-212, 213-251, 252-290, 291-333, 334-372, 373-411, 412-450, 451-489, 490-528, 529-567, and 568-601; these read DSLY…GVER, TRSE…GGPD, FAHC…TPVA, LEAY…ASNA, VKAE…ELDS, VKSE…SQDD, LETL…GPKI, TLND…RETI, IMNQ…GKEN, TIEH…GIRQ, LSQS…GVEF, FDEK…GTEW, AQNT…GQEI, TTKQ…DTNA, and LQGE…LALA.

It belongs to the phosphatase 2A regulatory subunit A family. As to quaternary structure, PP2A consists of a common heterodimeric core enzyme, composed of a 36 kDa catalytic subunit (subunit C) and a 65 kDa constant regulatory subunit (PR65 or subunit A), that associates with a variety of regulatory subunits. Proteins that associate with the core dimer include three families of regulatory subunits B (the R2/B/PR55/B55, R3/B''/PR72/PR130/PR59 and R5/B'/B56 families), the 48 kDa variable regulatory subunit, viral proteins, and cell signaling molecules. Interacts with IPO9. Interacts with SGO1. Interacts with RAF1.

In terms of biological role, the PR65 subunit of protein phosphatase 2A serves as a scaffolding molecule to coordinate the assembly of the catalytic subunit and a variable regulatory B subunit. The polypeptide is Serine/threonine-protein phosphatase 2A 65 kDa regulatory subunit A beta isoform (PPP2R1B) (Homo sapiens (Human)).